The sequence spans 228 residues: uncharacterized protein (228 aa).

S-adenosyl-L-methionine contacts are provided by glycine 179, isoleucine 199, and leucine 208.

It belongs to the class IV-like SAM-binding methyltransferase superfamily. RNA methyltransferase TrmH family.

This is an uncharacterized protein from Borreliella burgdorferi (strain ATCC 35210 / DSM 4680 / CIP 102532 / B31) (Borrelia burgdorferi).